The chain runs to 638 residues: Guanylate-binding protein 7 (638 aa).

The tract at residues 1-310 (MASGPNMEAP…DAINSGDVPC (310 aa)) is GTPase domain (Globular). A GB1/RHD3-type G domain is found at 35–277 (TQPVVVVAIV…FCSYIFSNSK (243 aa)). Residues 45 to 52 (GLYRTGKS), 67 to 69 (LGT), and 97 to 101 (DTEGL) each bind GTP. The tract at residues 311 to 638 (LENAVTTLAQ…TQNSDKVRKL (328 aa)) is interaction with the CYBA-CYBB complex. Residues 590–638 (SSLGAKILDGFGDVLISVVPGSGKYFGLGLKILSSQMNQTQNSDKVRKL) form a C-terminal tail; required for its localization to cytoplasmic vesicle region.

This sequence belongs to the TRAFAC class dynamin-like GTPase superfamily. GB1/RHD3 GTPase family. GB1 subfamily. Monomer and dimer. Interacts with CYBA, CYBA-CYBB complex and ATG4B. Interacts (via GB1/RHD3-type G domain) with NCF2 and NCF2-NCF4 complex.

It is found in the cytoplasmic vesicle membrane. It catalyses the reaction GTP + H2O = GDP + phosphate + H(+). It carries out the reaction GDP + H2O = GMP + phosphate + H(+). Inhibited by orthovanadate, berylium fluoride and aluminum flouride. In terms of biological role, interferon (IFN)-inducible GTPase that plays important roles in innate immunity against a diverse range of bacterial, viral and protozoan pathogens. Hydrolyzes GTP to GMP in two consecutive cleavage reactions and predominantly uses GTP and not GDP or GMP as the substrate. Following infection, recruited to the pathogen-containing vacuoles or vacuole-escaped bacteria and acts as a positive regulator of inflammasome assembly by promoting the release of inflammasome ligands from bacteria. Acts by promoting lysis of pathogen-containing vacuoles, releasing pathogens into the cytosol. Following pathogen release in the cytosol, promotes recruitment of proteins that mediate bacterial cytolysis, such as Gm12250/Irgb10: this liberates ligands that are detected by inflammasomes, such as lipopolysaccharide (LPS) that activates the non-canonical CASP4/CASP11 inflammasome or double-stranded DNA (dsDNA) that activates the AIM2 inflammasome. Also promotes IFN-gamma-mediated host defense against bacterial infections by regulating oxidative responses and bacteriolytic peptide generation. May help to assemble NADPH oxidase on phagosomal membranes by acting as a bridging protein between NADPH oxidase cytosolic subunits NCF2-NCF4 and the membrane subunits CYBA-CYBB. Participates along with GBP1 in trafficking monoubiquinated protein cargo to autolysosomes for generating ubiquitin-derived antimicrobial peptides. Facilitates influenza A virus replication by inhibiting the activation of NF-kappaB and JAK-STAT signaling pathways and the expression of type I, type III interferons and pro-inflammatory cytokines. Confers protection to several pathogens, including the bacterial pathogens Listeria monocytogenes and Mycobacterium bovis BCG as well as the protozoan pathogen Toxoplasma gondii. Required for disruption of the parasitophorous vacuole formed following T.gondii infection and subsequent killing of the parasite. This is Guanylate-binding protein 7 (Gbp7) from Mus musculus (Mouse).